The primary structure comprises 541 residues: Nucleoporin NUP57 (541 aa).

Positions 1–13 are enriched in low complexity; that stretch reads MFGFSGSNNGFGN. The disordered stretch occupies residues 1–261; sequence MFGFSGSNNG…STGSNLQQQQ (261 aa). FG repeat units follow at residues 2-3 and 11-12; these read FG. Residues 19–36 are compositionally biased toward polar residues; it reads TGFSFGQNNNNTNTQPSA. FXFG repeat units follow at residues 21 to 24 and 39 to 42; these read FSFG and FGFG. FG repeat units lie at residues 56-57 and 65-66; these read FG. Polar residues predominate over residues 58-72; the sequence is ANQATNTFGSNQQSS. A GLFG 1 repeat occupies 76-79; the sequence is GLFG. Residues 83 to 102 are compositionally biased toward low complexity; it reads ALGSLGSSSTTASGTTATGT. GLFG repeat units lie at residues 103 to 106, 120 to 123, 132 to 135, and 147 to 150; these read GLFG. Residues 105 to 116 show a composition bias toward polar residues; sequence FGQQTAQPQQST. Residues 125-146 show a composition bias toward polar residues; it reads KPTTTTGGLFGNSAQNNSTTSG. Polar residues predominate over residues 153–172; sequence VGSTGSLMGGNSTQNTSNMN. 4 GLFG repeats span residues 175–178, 190–193, 204–207, and 220–223; these read GLFG. Residues 228-257 are compositionally biased toward polar residues; sequence PQTNTAPGLGNTVSTQPSFAWSKPSTGSNL. A coiled-coil region spans residues 398–425; that stretch reads ILKAQSRNVEIEKRILKLGTQLATLKNR.

The protein belongs to the nucleoporin GLFG family. In terms of assembly, component of the nuclear pore complex (NPC). NPC constitutes the exclusive means of nucleocytoplasmic transport. NPCs allow the passive diffusion of ions and small molecules and the active, nuclear transport receptor-mediated bidirectional transport of macromolecules such as proteins, RNAs, ribonucleoparticles (RNPs), and ribosomal subunits across the nuclear envelope. Due to its 8-fold rotational symmetry, all subunits are present with 8 copies or multiples thereof. NUP57 is part of the NUP57 subcomplex (NIC96, NSP1, NUP49, NUP57) interacting with NUP49 and NSP1. Interacts through its FG repeats with karyopherins.

It localises to the nucleus. Its subcellular location is the nuclear pore complex. The protein resides in the nucleus membrane. Functionally, functions as a component of the nuclear pore complex (NPC). NPC components, collectively referred to as nucleoporins (NUPs), can play the role of both NPC structural components and of docking or interaction partners for transiently associated nuclear transport factors. Active directional transport is assured by both, a Phe-Gly (FG) repeat affinity gradient for these transport factors across the NPC and a transport cofactor concentration gradient across the nuclear envelope (GSP1 and GSP2 GTPases associated predominantly with GTP in the nucleus, with GDP in the cytoplasm). NUP57 plays an important role in several nuclear transport pathways including poly(A)+ RNA, tRNA, and pre-ribosome transport. This is Nucleoporin NUP57 (NUP57) from Saccharomyces cerevisiae (strain ATCC 204508 / S288c) (Baker's yeast).